Consider the following 264-residue polypeptide: Catenin delta-2 (264 aa).

ARM repeat units follow at residues 20–59 (NKIK…NLVY), 64–104 (DDNK…NLSS), 120–162 (LTNA…NVSS), and 166–211 (EARR…NLSY). The segment at 238 to 264 (GKDAESSGCWGKKKKKKKSQDQWDGVG) is disordered.

The protein belongs to the beta-catenin family. Binds to E-cadherin at a juxtamembrane site within the cytoplasmic domain. Binds to PSEN1. Interacts with ZBTB33. Interacts with ARHGEF28. Interacts (via the extreme C-terminus) with FRMPD2 (via the PDZ 2 domain). Interacts with PDZD2. Interacts with CDK5. Interacts with CTNBB1. Interacts with GSK3A and GSK3B. Interacts with DNM2. Interacts with CCDC85B. In terms of processing, O-glycosylated. Post-translationally, phosphorylated by CDK5. Phosphorylated by GSK3B. In terms of tissue distribution, predominantly expressed in brain; accumulates in cortical neurons (at protein level).

The protein localises to the nucleus. It is found in the cell junction. It localises to the adherens junction. Its subcellular location is the cell projection. The protein resides in the dendrite. The protein localises to the perikaryon. Its function is as follows. Has a critical role in neuronal development, particularly in the formation and/or maintenance of dendritic spines and synapses. Involved in the regulation of canonical Wnt signaling. It probably acts on beta-catenin turnover, facilitating beta-catenin interaction with GSK3B, phosphorylation, ubiquitination and degradation. May be involved in neuronal cell adhesion and tissue morphogenesis and integrity by regulating adhesion molecules. Functions as a transcriptional activator when bound to ZBTB33. The sequence is that of Catenin delta-2 (Ctnnd2) from Rattus norvegicus (Rat).